The sequence spans 350 residues: (S)-tetrahydroprotoberberine N-methyltransferase (350 aa).

Residues Ser91, Gly129, Asn153, Gln157, Asp179, Val180, and Val195 each contribute to the S-adenosyl-L-methionine site. Cys325 is a catalytic residue.

The protein belongs to the CFA/CMAS family. As to quaternary structure, homodimer.

The protein resides in the cytoplasm. It catalyses the reaction (S)-stylopine + S-adenosyl-L-methionine = (S)-cis-N-methylstylopine + S-adenosyl-L-homocysteine. The enzyme catalyses (S)-tetrahydropalmatine + S-adenosyl-L-methionine = (S)-cis-N-methyltetrahydropalmatine + S-adenosyl-L-homocysteine. It carries out the reaction (S)-canadine + S-adenosyl-L-methionine = (S)-cis-N-methylcanadine + S-adenosyl-L-homocysteine. The catalysed reaction is (S)-scoulerine + S-adenosyl-L-methionine = (S)-cis-N-methylscoulerine + S-adenosyl-L-homocysteine. It functions in the pathway alkaloid biosynthesis. Its function is as follows. N-methyltransferase with a broad substrate range, accepting protoberberine alkaloids (R,S)-stylopine, (R,S)-nandinine and (R,S)-tetrahydropalmatine, and to a lesser extent (R,S)-canadine, (R,S)-tetrahydrogroenlandicine (cheilanthifoline) and (S)-scoulerine. The protein is (S)-tetrahydroprotoberberine N-methyltransferase of Eschscholzia californica (California poppy).